Reading from the N-terminus, the 316-residue chain is Transaldolase (316 aa).

The Schiff-base intermediate with substrate role is filled by K127.

Belongs to the transaldolase family. Type 2 subfamily.

The protein localises to the cytoplasm. The enzyme catalyses D-sedoheptulose 7-phosphate + D-glyceraldehyde 3-phosphate = D-erythrose 4-phosphate + beta-D-fructose 6-phosphate. The protein operates within carbohydrate degradation; pentose phosphate pathway; D-glyceraldehyde 3-phosphate and beta-D-fructose 6-phosphate from D-ribose 5-phosphate and D-xylulose 5-phosphate (non-oxidative stage): step 2/3. Its function is as follows. Transaldolase is important for the balance of metabolites in the pentose-phosphate pathway. In Helicobacter pylori (strain P12), this protein is Transaldolase.